The primary structure comprises 289 residues: Glucosamine-6-phosphate deaminase 1 (289 aa).

Lys64 carries the post-translational modification N6-acetyllysine. The Proton acceptor; for enolization step role is filled by Asp72. Asp141 serves as the catalytic For ring-opening step. His143 acts as the Proton acceptor; for ring-opening step in catalysis. Glu148 (for ring-opening step) is an active-site residue. At Thr161 the chain carries Phosphothreonine.

The protein belongs to the glucosamine/galactosamine-6-phosphate isomerase family. In terms of assembly, homohexamer.

The protein resides in the cytoplasm. The catalysed reaction is alpha-D-glucosamine 6-phosphate + H2O = beta-D-fructose 6-phosphate + NH4(+). The protein operates within nucleotide-sugar biosynthesis; UDP-N-acetyl-alpha-D-glucosamine biosynthesis; alpha-D-glucosamine 6-phosphate from D-fructose 6-phosphate: step 1/1. With respect to regulation, allosterically activated by N-acetylglucosamine-6-phosphate (GlcNAc6P). In terms of biological role, catalyzes the reversible conversion of alpha-D-glucosamine 6-phosphate (GlcN-6P) into beta-D-fructose 6-phosphate (Fru-6P) and ammonium ion, a regulatory reaction step in de novo uridine diphosphate-N-acetyl-alpha-D-glucosamine (UDP-GlcNAc) biosynthesis via hexosamine pathway. Deamination is coupled to aldo-keto isomerization mediating the metabolic flux from UDP-GlcNAc toward Fru-6P. At high ammonium level can drive amination and isomerization of Fru-6P toward hexosamines and UDP-GlcNAc synthesis. Has a role in fine tuning the metabolic fluctuations of cytosolic UDP-GlcNAc and their effects on hyaluronan synthesis that occur during tissue remodeling. Seems to trigger calcium oscillations in mammalian eggs. These oscillations serve as the essential trigger for egg activation and early development of the embryo. The sequence is that of Glucosamine-6-phosphate deaminase 1 from Homo sapiens (Human).